The sequence spans 330 residues: MAAVDSFYLLYREIARSCNCYMEALALVGAWYTARKSITVICDFYSLIRLHFIPRLGSRADLIKQYGRWAVVSGATDGIGKAYAEELASRGLNIILISRNEEKLQVVAKDIADTYKVETDIIVADFSSGREIYLPIREALKDKDVGILVNNVGVFYPYPQYFTQLSEDKLWDIINVNIAAASLMVHVVLPGMVERKKGAIVTISSGSCCKPTPQLAAFSASKAYLDHFSRALQYEYASKGIFVQSLIPFYVATSMTAPSNFLHRCSWLVPSPKVYAHHAVSTLGISKRTTGYWSHSIQFLFAQYMPEWLWVWGANILNRSLRKEALSCTA.

Ala-2 bears the N-acetylalanine mark. The interval 2-82 (AAVDSFYLLY…SGATDGIGKA (81 aa)) is required for mitochondria translocation. NADP(+) contacts are provided by residues 74-80 (GATDGIG), Asp-125, and Lys-222.

Belongs to the short-chain dehydrogenases/reductases (SDR) family. 17-beta-HSD 3 subfamily. As to quaternary structure, interacts with STYXL1. As to expression, highly expressed in testis and ovary. Also detected in thyroid, spinal cord, adrenal gland, heart, placenta, skeletal muscle, small intestine, colon, spleen, prostate and pancreas.

Its subcellular location is the mitochondrion. The polypeptide is Inactive hydroxysteroid dehydrogenase-like protein 1 (HSDL1) (Homo sapiens (Human)).